A 505-amino-acid chain; its full sequence is MKKRQSGVLMHISSLPGAYGIGSFGQSAYDFVDFLVRTKQRYWQILPLGATSYGDSPYQSFSAFAGNTHFIDLDILVEQGLLEASDLEGVDFGSDASEVDYAKIYYARRPLLEKAVKRFFEVGDVKDFEKFAQDNQSWLELFAEYMAIKEYFDNLAWTEWPDADARARKASALESYREQLADKLVYHRVTQYFFFQQWLKLKAYANDNHIEIVGDMPIYVAEDSSDMWANPHLFKTDVNGKATCIAGCPPDEFSVTGQLWGNPIYDWEAMDKDGYKWWIERLRESFKIYDIVRIDHFRGFESYWEIPAGSDTAAPGEWVKGPGYKLFAAVKEELGELNIIAEDLGFMTDEVIELRERTGFPGMKILQFAFNPEDESIDSPHLAPANSVMYTGTHDNNTVLGWYRNEIDDATREYMARYTNRKEYETVVHAMLRTVFSSVSFMAIATMQDLLELDEAARMNFPSTLGGNWSWRMTEDQLTPAVEEGLLDLTTIYRRINENLVDLKK.

This sequence belongs to the disproportionating enzyme family.

Its subcellular location is the cytoplasm. The catalysed reaction is Transfers a segment of a (1-&gt;4)-alpha-D-glucan to a new position in an acceptor, which may be glucose or a (1-&gt;4)-alpha-D-glucan.. This Streptococcus pneumoniae serotype 4 (strain ATCC BAA-334 / TIGR4) protein is 4-alpha-glucanotransferase (malQ).